Here is an 82-residue protein sequence, read N- to C-terminus: U6 snRNA-associated Sm-like protein LSm6 (82 aa).

Residues 13-82 (DPSGFLSEII…GNNVMYISAD (70 aa)) form the Sm domain.

It belongs to the snRNP Sm proteins family. SmF/LSm6 subfamily. As to quaternary structure, component of the heptameric LSM1-LSM7 complex, which consists of snr-1/lsm1, snr-2/lsm2, snr-3/lsm3, snr-4/lsm4, snr-5/lsm5, snr-6/lsm6 and snr-7/lsm7. Component of the heptameric LSM2-LSM8 complex, which consists of snr-2/lsm2, snr-3/lsm3, snr-4/lsm4, snr-5/lsm5, snr-6/lsm6, snr-7/lsm7 and snr-8/lsm8. The LSm subunits form a seven-membered ring structure with a doughnut shape.

Its subcellular location is the cytoplasm. It localises to the nucleus. Functionally, component of LSm protein complexes, which are involved in RNA processing and may function in a chaperone-like manner, facilitating the efficient association of RNA processing factors with their substrates. Component of the cytoplasmic LSM1-LSM7 complex, which is thought to be involved in mRNA degradation by activating the decapping step in the 5'-to-3' mRNA decay pathway. Component of the nuclear LSM2-LSM8 complex, which is involved in splicing of nuclear mRNAs. LSM2-LSM8 associates with multiple snRNP complexes containing the U6 snRNA (U4/U6 di-snRNP, spliceosomal U4/U6.U5 tri-snRNP, and free U6 snRNP). It binds directly to the 3'-terminal U-tract of U6 snRNA and plays a role in the biogenesis and stability of the U6 snRNP and U4/U6 snRNP complexes. LSM2-LSM8 probably also is involved degradation of nuclear pre-mRNA by targeting them for decapping, and in processing of pre-tRNAs, pre-rRNAs and U3 snoRNA. This Neurospora crassa (strain ATCC 24698 / 74-OR23-1A / CBS 708.71 / DSM 1257 / FGSC 987) protein is U6 snRNA-associated Sm-like protein LSm6 (snr-6).